A 173-amino-acid chain; its full sequence is NAD(P)H-quinone oxidoreductase subunit J (173 aa).

The protein belongs to the complex I 30 kDa subunit family. In terms of assembly, NDH-1 can be composed of about 15 different subunits; different subcomplexes with different compositions have been identified which probably have different functions.

The protein resides in the cellular thylakoid membrane. The catalysed reaction is a plastoquinone + NADH + (n+1) H(+)(in) = a plastoquinol + NAD(+) + n H(+)(out). The enzyme catalyses a plastoquinone + NADPH + (n+1) H(+)(in) = a plastoquinol + NADP(+) + n H(+)(out). NDH-1 shuttles electrons from an unknown electron donor, via FMN and iron-sulfur (Fe-S) centers, to quinones in the respiratory and/or the photosynthetic chain. The immediate electron acceptor for the enzyme in this species is believed to be plastoquinone. Couples the redox reaction to proton translocation, and thus conserves the redox energy in a proton gradient. Cyanobacterial NDH-1 also plays a role in inorganic carbon-concentration. The chain is NAD(P)H-quinone oxidoreductase subunit J from Prochlorococcus marinus (strain NATL1A).